We begin with the raw amino-acid sequence, 212 residues long: External core antigen (212 aa).

A signal peptide spans 1–19 (MQLFHLCLVISCSCPTVQA). Positions 25-27 (GWL) are HBEAG. Positions 165 to 212 (NAPILSTLPETTVVRRRGRSPRRRTPSPRRRRSQSPRRRRSQSRESQC) are disordered. Over residues 178-205 (VRRRGRSPRRRTPSPRRRRSQSPRRRRS) the composition is skewed to basic residues. A 1; half-length repeat occupies 184-190 (SPRRRTP). The 3 X 8 AA repeats of S-P-R-R-R-R-S-Q stretch occupies residues 184 to 206 (SPRRRTPSPRRRRSQSPRRRRSQ). Positions 184–212 (SPRRRTPSPRRRRSQSPRRRRSQSRESQC) are excised as a propeptide. A run of 2 repeats spans residues 191–198 (SPRRRRSQ) and 199–206 (SPRRRRSQ).

The protein belongs to the orthohepadnavirus precore antigen family. Homodimerizes. Post-translationally, phosphorylated. In terms of processing, cleaved by host furin.

The protein resides in the secreted. Its subcellular location is the host nucleus. Its function is as follows. May regulate immune response to the intracellular capsid in acting as a T-cell tolerogen, by having an immunoregulatory effect which prevents destruction of infected cells by cytotoxic T-cells. This immune regulation may predispose to chronicity during perinatal infections and prevent severe liver injury during adult infections. In Hepatitis B virus genotype B1 subtype adw (isolate Japan/pJDW233/1988) (HBV-B), this protein is External core antigen.